A 294-amino-acid chain; its full sequence is GTPase Era (294 aa).

An Era-type G domain is found at 2–171 (NSGVVTIIGR…LSLLIELLPE (170 aa)). The tract at residues 10-17 (GRPSAGKS) is G1. Residue 10–17 (GRPSAGKS) coordinates GTP. The segment at 36 to 40 (QTTRN) is G2. The interval 57–60 (DTPG) is G3. GTP contacts are provided by residues 57–61 (DTPGY) and 119–122 (NKAD). Residues 119 to 122 (NKAD) are G4. The G5 stretch occupies residues 150–152 (ISA). The 79-residue stretch at 202-280 (TREEIPHALY…QLDLQVRVNK (79 aa)) folds into the KH type-2 domain.

Belongs to the TRAFAC class TrmE-Era-EngA-EngB-Septin-like GTPase superfamily. Era GTPase family. As to quaternary structure, monomer.

The protein localises to the cytoplasm. It localises to the cell inner membrane. Its function is as follows. An essential GTPase that binds both GDP and GTP, with rapid nucleotide exchange. Plays a role in 16S rRNA processing and 30S ribosomal subunit biogenesis and possibly also in cell cycle regulation and energy metabolism. In Treponema denticola (strain ATCC 35405 / DSM 14222 / CIP 103919 / JCM 8153 / KCTC 15104), this protein is GTPase Era.